The sequence spans 285 residues: MMTAETKGRAACLIGWPAAHSRSPLIHHYWLRLHGIAGGYNIEAIPPEGLAEFIMHLSTHGFVGANVTIPHKERALQLTAPDERARAIGAANTLYYDGKTLRSTNTDVEGFIGNLDAAAPGWDRTGDALVLGAGGSSRAVVFGLIERGIKRIHLVNRTMERAQALADQFGATVMPLAWSGLGDVLPRAGLLVNTTSLGMKGQPPLDIELPLLPLDAVVADLVYVPLETPLLAAARARGLRTADGLGMLLHQAVRGFELWFGQRPAVSPELRALVEADLRIPHPAT.

Residues 21–23 (SRS) and Thr-68 contribute to the shikimate site. Catalysis depends on Lys-72, which acts as the Proton acceptor. Glu-83 serves as a coordination point for NADP(+). 2 residues coordinate shikimate: Asn-92 and Asp-107. Residues 132-136 (GAGGS), 156-161 (NRTMER), and Leu-221 contribute to the NADP(+) site. Position 223 (Tyr-223) interacts with shikimate. Gly-244 provides a ligand contact to NADP(+).

It belongs to the shikimate dehydrogenase family. As to quaternary structure, homodimer.

It carries out the reaction shikimate + NADP(+) = 3-dehydroshikimate + NADPH + H(+). Its pathway is metabolic intermediate biosynthesis; chorismate biosynthesis; chorismate from D-erythrose 4-phosphate and phosphoenolpyruvate: step 4/7. Functionally, involved in the biosynthesis of the chorismate, which leads to the biosynthesis of aromatic amino acids. Catalyzes the reversible NADPH linked reduction of 3-dehydroshikimate (DHSA) to yield shikimate (SA). The protein is Shikimate dehydrogenase (NADP(+)) of Nitrobacter hamburgensis (strain DSM 10229 / NCIMB 13809 / X14).